The following is a 155-amino-acid chain: uncharacterized protein (155 aa).

2 disordered regions span residues 24–63 (RVGYREGPTVETKKIQPQLPDEDGNESDKEDEQPQVVVLK) and 80–155 (KAAK…DENE). Over residues 43–56 (PDEDGNESDKEDEQ) the composition is skewed to acidic residues. Ser-50 is subject to Phosphoserine. Residue Lys-108 is modified to N6-acetyllysine. Over residues 128–147 (KQSPVRKNSQKQIKNSSLLS) the composition is skewed to polar residues. Phosphoserine occurs at positions 130, 147, and 150.

This is an uncharacterized protein from Rattus norvegicus (Rat).